The following is a 172-amino-acid chain: uncharacterized protein (172 aa).

This is an uncharacterized protein from Aquifex aeolicus (strain VF5).